A 71-amino-acid chain; its full sequence is Putative antitoxin VapB15 (71 aa).

Belongs to the UPF0330 family.

Its function is as follows. Possibly the antitoxin component of a type II toxin-antitoxin (TA) system. Its cognate toxin is VapC15 (Potential). This chain is Putative antitoxin VapB15 (vapB15), found in Archaeoglobus fulgidus (strain ATCC 49558 / DSM 4304 / JCM 9628 / NBRC 100126 / VC-16).